A 416-amino-acid polypeptide reads, in one-letter code: Putative competence-damage inducible protein (416 aa).

It belongs to the CinA family.

The protein is Putative competence-damage inducible protein of Geobacillus sp. (strain WCH70).